A 328-amino-acid polypeptide reads, in one-letter code: D-cysteine desulfhydrase (328 aa).

N6-(pyridoxal phosphate)lysine is present on lysine 51.

It belongs to the ACC deaminase/D-cysteine desulfhydrase family. As to quaternary structure, homodimer. It depends on pyridoxal 5'-phosphate as a cofactor.

The enzyme catalyses D-cysteine + H2O = hydrogen sulfide + pyruvate + NH4(+) + H(+). Its function is as follows. Catalyzes the alpha,beta-elimination reaction of D-cysteine and of several D-cysteine derivatives. It could be a defense mechanism against D-cysteine. In Salmonella paratyphi C (strain RKS4594), this protein is D-cysteine desulfhydrase.